The primary structure comprises 339 residues: Anthranilate phosphoribosyltransferase (339 aa).

5-phospho-alpha-D-ribose 1-diphosphate is bound by residues G81, 84–85 (GD), S89, 91–94 (NVSS), 109–117 (KHGNRALSS), and A121. Residue G81 coordinates anthranilate. S93 contacts Mg(2+). Position 112 (N112) interacts with anthranilate. R167 contributes to the anthranilate binding site. D225 and E226 together coordinate Mg(2+).

The protein belongs to the anthranilate phosphoribosyltransferase family. In terms of assembly, homodimer. Mg(2+) serves as cofactor.

It carries out the reaction N-(5-phospho-beta-D-ribosyl)anthranilate + diphosphate = 5-phospho-alpha-D-ribose 1-diphosphate + anthranilate. The protein operates within amino-acid biosynthesis; L-tryptophan biosynthesis; L-tryptophan from chorismate: step 2/5. Catalyzes the transfer of the phosphoribosyl group of 5-phosphorylribose-1-pyrophosphate (PRPP) to anthranilate to yield N-(5'-phosphoribosyl)-anthranilate (PRA). The polypeptide is Anthranilate phosphoribosyltransferase (Brucella suis biovar 1 (strain 1330)).